We begin with the raw amino-acid sequence, 591 residues long: Inactive metallocarboxypeptidase ECM14 (591 aa).

The N-terminal stretch at 1–21 (MRLFSHLAVLAILACAVPITA) is a signal peptide. Residues 22-175 (IPSFLSNSYP…QTIYESYPSS (154 aa)) constitute a propeptide that is removed on maturation. Positions 203–523 (DYQPFSVIVP…NAVMVLGRFL (321 aa)) constitute a Peptidase M14 domain. His-265 and Glu-268 together coordinate Zn(2+). Substrate contacts are provided by residues 265 to 268 (HARE), Arg-323, and 340 to 341 (DR). The cysteines at positions 334 and 357 are disulfide-linked. N-linked (GlcNAc...) asparagine glycans are attached at residues Asn-350, Asn-381, and Asn-386. Residue His-397 coordinates Zn(2+). 398–399 (SY) contacts substrate. The tract at residues 533–591 (DWEDESQRPKADEDDIPSENELDENDDSWIPYDYRNHDDQNEGEGYDNDEWGFRRRRKR) is disordered. 2 stretches are compositionally biased toward acidic residues: residues 544–559 (DEDDIPSENELDENDD) and 573–582 (NEGEGYDNDE).

It belongs to the peptidase M14 family. Zn(2+) is required as a cofactor.

The protein resides in the vacuole. It is found in the secreted. Inactive carboxypeptidase that may play a role in cell wall organization and biogenesis. This is Inactive metallocarboxypeptidase ECM14 (ECM14) from Paracoccidioides brasiliensis (strain Pb18).